The primary structure comprises 36 residues: Pancreatic polypeptide (36 aa).

The residue at position 36 (Y36) is a Tyrosine amide.

Belongs to the NPY family.

It is found in the secreted. Functionally, hormone secreted by pancreatic cells that acts as a regulator of pancreatic and gastrointestinal functions probably by signaling through the G protein-coupled receptor NPY4R2. The chain is Pancreatic polypeptide (PPY) from Macaca mulatta (Rhesus macaque).